A 384-amino-acid chain; its full sequence is S-adenosylmethionine synthase (384 aa).

His15 is an ATP binding site. Asp17 lines the Mg(2+) pocket. Glu43 is a binding site for K(+). Residues Glu56 and Gln99 each contribute to the L-methionine site. The tract at residues 99-109 (QSPDINQGVDR) is flexible loop. Residues 164 to 166 (DAK), 230 to 231 (RF), Asp239, 245 to 246 (RK), Ala262, and Lys266 each bind ATP. Asp239 serves as a coordination point for L-methionine. Lys270 serves as a coordination point for L-methionine.

The protein belongs to the AdoMet synthase family. Homotetramer; dimer of dimers. It depends on Mg(2+) as a cofactor. The cofactor is K(+).

It is found in the cytoplasm. The catalysed reaction is L-methionine + ATP + H2O = S-adenosyl-L-methionine + phosphate + diphosphate. It participates in amino-acid biosynthesis; S-adenosyl-L-methionine biosynthesis; S-adenosyl-L-methionine from L-methionine: step 1/1. Functionally, catalyzes the formation of S-adenosylmethionine (AdoMet) from methionine and ATP. The overall synthetic reaction is composed of two sequential steps, AdoMet formation and the subsequent tripolyphosphate hydrolysis which occurs prior to release of AdoMet from the enzyme. The protein is S-adenosylmethionine synthase of Salmonella choleraesuis (strain SC-B67).